A 235-amino-acid chain; its full sequence is Orotidine 5'-phosphate decarboxylase (235 aa).

Substrate contacts are provided by residues aspartate 12, lysine 34, 61 to 70 (DMKLLDIDNT), threonine 116, arginine 177, glutamine 186, glycine 206, and arginine 207. Lysine 63 acts as the Proton donor in catalysis.

The protein belongs to the OMP decarboxylase family. Type 1 subfamily. Homodimer.

The catalysed reaction is orotidine 5'-phosphate + H(+) = UMP + CO2. It functions in the pathway pyrimidine metabolism; UMP biosynthesis via de novo pathway; UMP from orotate: step 2/2. Its function is as follows. Catalyzes the decarboxylation of orotidine 5'-monophosphate (OMP) to uridine 5'-monophosphate (UMP). This is Orotidine 5'-phosphate decarboxylase from Rhizobium johnstonii (strain DSM 114642 / LMG 32736 / 3841) (Rhizobium leguminosarum bv. viciae).